The sequence spans 142 residues: MKTEVAKIENVKRDWYLVDAQEMVLGRLASQIANILRGKNKAIYTPSVDTGDFVIVVNAEKIALTGRKLADKSYYSHSGFPGGLKEISAGKLLEKKPEELIKRAVKGMLPKNKLSRHMLKKLKIYAGSSHPHDAQQPKVLAL.

It belongs to the universal ribosomal protein uL13 family. Part of the 50S ribosomal subunit.

Functionally, this protein is one of the early assembly proteins of the 50S ribosomal subunit, although it is not seen to bind rRNA by itself. It is important during the early stages of 50S assembly. This is Large ribosomal subunit protein uL13 from Pelobacter propionicus (strain DSM 2379 / NBRC 103807 / OttBd1).